A 1275-amino-acid polypeptide reads, in one-letter code: Surfactin synthase subunit 3 (1275 aa).

A Carrier domain is found at 968 to 1043; that stretch reads GPRNEMEETI…GISAYLKNGG (76 aa). Serine 1003 is modified (O-(pantetheine 4'-phosphoryl)serine). Residues 1059–1271 are thioesterase; the sequence is QIIFAFPPVL…ILLEFLNTQT (213 aa). Catalysis depends on residues serine 1120, aspartate 1147, and histidine 1247.

It belongs to the ATP-dependent AMP-binding enzyme family. The cofactor is pantetheine 4'-phosphate.

It participates in antibiotic biosynthesis; surfactin biosynthesis. Its function is as follows. Probably activates a leucine. In Bacillus subtilis (strain 168), this protein is Surfactin synthase subunit 3 (srfAC).